A 109-amino-acid polypeptide reads, in one-letter code: Large ribosomal subunit protein eL30 (109 aa).

This sequence belongs to the eukaryotic ribosomal protein eL30 family.

The protein is Large ribosomal subunit protein eL30 of Methanopyrus kandleri (strain AV19 / DSM 6324 / JCM 9639 / NBRC 100938).